The following is a 421-amino-acid chain: Plant UBX domain-containing protein 5 (421 aa).

In terms of domain architecture, UBA spans 4–45; it reads ETNENLINSFIEITSSSREEANFFLESHTWNLDAAVSTFLDN. 2 disordered regions span residues 46-171 and 292-338; these read DAAA…MMVQ and ENFT…PSRG. Polar residues predominate over residues 69–84; it reads QSPSQSHSPDYTPSET. Residues 85–102 are compositionally biased toward low complexity; sequence SPSPSRSRSASPSSRAAP. The region spanning 231–295 is the SEP domain; sequence RIMHTITFWL…DLVRRGENFT (65 aa). Residues 312–328 are compositionally biased toward low complexity; that stretch reads GASGSGSSSAPQASSAP. Residues 343 to 420 form the UBX domain; that stretch reads PAAPTTSIQL…GIANAVVIQK (78 aa).

As to quaternary structure, interacts with CDC48A (non-hexameric) via its UBX domain.

This Arabidopsis thaliana (Mouse-ear cress) protein is Plant UBX domain-containing protein 5.